Consider the following 438-residue polypeptide: Methionine aminopeptidase 2 (438 aa).

Positions 1-89 are disordered; that stretch reads MAAQAAPAEE…LFPNKQYPKG (89 aa). The segment covering 10 to 20 has biased composition (basic and acidic residues); it reads ELSKLSVEETK. Positions 51 to 65 are enriched in basic residues; that stretch reads AKKKKKRKPRKKKKA. Histidine 191 contacts substrate. A divalent metal cation is bound by residues aspartate 211, aspartate 222, and histidine 291. Substrate is bound at residue histidine 299. The a divalent metal cation site is built by glutamate 324 and glutamate 419.

It belongs to the peptidase M24A family. Methionine aminopeptidase eukaryotic type 2 subfamily. Co(2+) serves as cofactor. Zn(2+) is required as a cofactor. Requires Mn(2+) as cofactor. It depends on Fe(2+) as a cofactor.

The protein localises to the cytoplasm. It carries out the reaction Release of N-terminal amino acids, preferentially methionine, from peptides and arylamides.. In terms of biological role, cotranslationally removes the N-terminal methionine from nascent proteins. The N-terminal methionine is often cleaved when the second residue in the primary sequence is small and uncharged (Met-Ala-, Cys, Gly, Pro, Ser, Thr, or Val). The polypeptide is Methionine aminopeptidase 2 (Sordaria macrospora (strain ATCC MYA-333 / DSM 997 / K(L3346) / K-hell)).